Reading from the N-terminus, the 536-residue chain is MEFSSPSREECPKPLSRVSIMAGSLTGLLLLQAVSWASGARPCIPKSFGYSSVVCVCNATYCDSFDPPTFPALGTFSRYESTRSGRRMELSMGPIQANHTGTGLLLTLQPEQKFQKVKGFGGAMTDAAALNILALSPPAQNLLLKSYFSEEGIGYNIIRVPMASCDFSIRTYTYADTPDDFQLHNFSLPEEDTKLKIPLIHRALQLAQRPVSLLASPWTSPTWLKTNGAVNGKGSLKGQPGDIYHQTWARYFVKFLDAYAEHKLQFWAVTAENEPSAGLLSGYPFQCLGFTPEHQRDFIARDLGPTLANSTHHNVRLLMLDDQRLLLPHWAKVVLTDPEAAKYVHGIAVHWYLDFLAPAKATLGETHRLFPNTMLFASEACVGSKFWEQSVRLGSWDRGMQYSHSIITNLLYHVVGWTDWNLALNPEGGPNWVRNFVDSPIIVDITKDTFYKQPMFYHLGHFSKFIPEGSQRVGLVASQKNDLDAVALMHPDGSAVVVVLNRSSKDVPLTIKDPAVGFLETISPGYSIHTYLWRRQ.

The N-terminal stretch at 1-39 (MEFSSPSREECPKPLSRVSIMAGSLTGLLLLQAVSWASG) is a signal peptide. 2 cysteine pairs are disulfide-bonded: Cys43-Cys55 and Cys57-Cys62. N-linked (GlcNAc...) asparagine glycans are attached at residues Asn58, Asn98, and Asn185. The active-site Proton donor is the Glu274. An N-linked (GlcNAc...) asparagine glycan is attached at Asn309. The active-site Nucleophile is Glu379. N-linked (GlcNAc...) asparagine glycosylation is present at Asn501.

It belongs to the glycosyl hydrolase 30 family. In terms of assembly, interacts with saposin-C. Interacts with SCARB2. Interacts with TCP1. May interacts with SNCA; this interaction may inhibit the glucosylceramidase activity. Interacts with GRN; this interaction prevents aggregation of GBA1-SCARB2 complex via interaction with HSPA1A upon stress.

The protein resides in the lysosome membrane. It carries out the reaction a beta-D-glucosyl-(1&lt;-&gt;1')-N-acylsphing-4-enine + H2O = an N-acylsphing-4-enine + D-glucose. The catalysed reaction is a beta-D-galactosyl-(1&lt;-&gt;1')-N-acylsphing-4-enine + H2O = an N-acylsphing-4-enine + D-galactose. It catalyses the reaction cholesteryl 3-beta-D-glucoside + H2O = cholesterol + D-glucose. The enzyme catalyses a beta-D-glucosyl-(1&lt;-&gt;1')-N-acylsphing-4-enine + cholesterol = cholesteryl 3-beta-D-glucoside + an N-acylsphing-4-enine. It carries out the reaction beta-D-glucosyl-N-(9Z-octadecenoyl)-sphing-4E-enine + cholesterol = N-(9Z-octadecenoyl)-sphing-4-enine + cholesteryl 3-beta-D-glucoside. The catalysed reaction is beta-D-glucosyl-(1&lt;-&gt;1')-N-hexadecanoylsphing-4-enine + cholesterol = cholesteryl 3-beta-D-glucoside + N-hexadecanoylsphing-4-enine. It catalyses the reaction beta-D-glucosyl-N-octanoylsphing-4E-enine + cholesterol = N-octanoylsphing-4-enine + cholesteryl 3-beta-D-glucoside. The enzyme catalyses beta-D-glucosyl-N-dodecanoylsphing-4-enine + cholesterol = N-dodecanoylsphing-4-enine + cholesteryl 3-beta-D-glucoside. It carries out the reaction beta-D-glucosyl-(1&lt;-&gt;1)-N-octadecanoylsphing-4-enine + cholesterol = N-octadecanoylsphing-4-enine + cholesteryl 3-beta-D-glucoside. The catalysed reaction is beta-D-glucosyl-(1&lt;-&gt;1')-N-(15Z-tetracosenoyl)-sphing-4-enine + cholesterol = N-(15Z-tetracosenoyl)-sphing-4-enine + cholesteryl 3-beta-D-glucoside. It catalyses the reaction a beta-D-galactosyl-(1&lt;-&gt;1')-N-acylsphing-4-enine + cholesterol = cholesteryl 3-beta-D-galactoside + an N-acylsphing-4-enine. The enzyme catalyses 1-(beta-D-galactosyl)-N-dodecanoylsphing-4-enine + cholesterol = cholesteryl 3-beta-D-galactoside + N-dodecanoylsphing-4-enine. It carries out the reaction a beta-D-xylosyl-(1&lt;-&gt;1')-N-acylsphing-4-enine + cholesterol = cholesteryl 3-beta-D-xyloside + an N-acylsphing-4-enine. The catalysed reaction is beta-D-xylosyl-(1&lt;-&gt;1')-N-(9Z-octadecenoyl)-sphing-4-enine + cholesterol = cholesteryl 3-beta-D-xyloside + N-(9Z-octadecenoyl)-sphing-4-enine. The protein operates within steroid metabolism; cholesterol metabolism. It functions in the pathway sphingolipid metabolism. Its activity is regulated as follows. Synergistically activated by saposin-A and saposin-C, two saposin peptides produced by proteolytic processing of prosaposin/PSAP. Saposin-C activates GBA1 through its recruitment to membranes. The membrane structure and composition in anionic phospholipids are also important for the activation. Activated by PKC in the salvage pathway of ceramide formation. Inhibited by conduritol B epoxide/CBE. Its function is as follows. Glucosylceramidase that catalyzes, within the lysosomal compartment, the hydrolysis of glucosylceramides/GlcCers (such as beta-D-glucosyl-(1&lt;-&gt;1')-N-acylsphing-4-enine) into free ceramides (such as N-acylsphing-4-enine) and glucose. Plays a central role in the degradation of complex lipids and the turnover of cellular membranes. Through the production of ceramides, participates in the PKC-activated salvage pathway of ceramide formation. Catalyzes the glucosylation of cholesterol, through a transglucosylation reaction where glucose is transferred from GlcCer to cholesterol. GlcCer containing mono-unsaturated fatty acids (such as beta-D-glucosyl-N-(9Z-octadecenoyl)-sphing-4-enine) are preferred as glucose donors for cholesterol glucosylation when compared with GlcCer containing same chain length of saturated fatty acids (such as beta-D-glucosyl-N-octadecanoyl-sphing-4-enine). Under specific conditions, may alternatively catalyze the reverse reaction, transferring glucose from cholesteryl 3-beta-D-glucoside to ceramide. Can also hydrolyze cholesteryl 3-beta-D-glucoside producing glucose and cholesterol. Catalyzes the hydrolysis of galactosylceramides/GalCers (such as beta-D-galactosyl-(1&lt;-&gt;1')-N-acylsphing-4-enine), as well as the transfer of galactose between GalCers and cholesterol in vitro, but with lower activity than with GlcCers. Contrary to GlcCer and GalCer, xylosylceramide/XylCer (such as beta-D-xyosyl-(1&lt;-&gt;1')-N-acylsphing-4-enine) is not a good substrate for hydrolysis, however it is a good xylose donor for transxylosylation activity to form cholesteryl 3-beta-D-xyloside. The polypeptide is Lysosomal acid glucosylceramidase (Homo sapiens (Human)).